Here is a 1366-residue protein sequence, read N- to C-terminus: DNA-directed RNA polymerase subunit beta'' (1366 aa).

The Zn(2+) site is built by C220, C291, C298, and C301.

This sequence belongs to the RNA polymerase beta' chain family. RpoC2 subfamily. As to quaternary structure, in plastids the minimal PEP RNA polymerase catalytic core is composed of four subunits: alpha, beta, beta', and beta''. When a (nuclear-encoded) sigma factor is associated with the core the holoenzyme is formed, which can initiate transcription. Zn(2+) serves as cofactor.

It localises to the plastid. The protein localises to the chloroplast. It carries out the reaction RNA(n) + a ribonucleoside 5'-triphosphate = RNA(n+1) + diphosphate. DNA-dependent RNA polymerase catalyzes the transcription of DNA into RNA using the four ribonucleoside triphosphates as substrates. This chain is DNA-directed RNA polymerase subunit beta'', found in Phaseolus vulgaris (Kidney bean).